The primary structure comprises 264 residues: Thymidylate synthase (264 aa).

Arg-21 is a dUMP binding site. His-51 lines the (6R)-5,10-methylene-5,6,7,8-tetrahydrofolate pocket. 126-127 (RR) contacts dUMP. Cys-146 acts as the Nucleophile in catalysis. DUMP-binding positions include 166–169 (RSAD), Asn-177, and 207–209 (HLY). Asp-169 is a binding site for (6R)-5,10-methylene-5,6,7,8-tetrahydrofolate. Ala-263 is a (6R)-5,10-methylene-5,6,7,8-tetrahydrofolate binding site.

The protein belongs to the thymidylate synthase family. Bacterial-type ThyA subfamily. In terms of assembly, homodimer.

The protein resides in the cytoplasm. The catalysed reaction is dUMP + (6R)-5,10-methylene-5,6,7,8-tetrahydrofolate = 7,8-dihydrofolate + dTMP. Its pathway is pyrimidine metabolism; dTTP biosynthesis. Functionally, catalyzes the reductive methylation of 2'-deoxyuridine-5'-monophosphate (dUMP) to 2'-deoxythymidine-5'-monophosphate (dTMP) while utilizing 5,10-methylenetetrahydrofolate (mTHF) as the methyl donor and reductant in the reaction, yielding dihydrofolate (DHF) as a by-product. This enzymatic reaction provides an intracellular de novo source of dTMP, an essential precursor for DNA biosynthesis. The protein is Thymidylate synthase of Dechloromonas aromatica (strain RCB).